Consider the following 124-residue polypeptide: Large ribosomal subunit protein bL20 (124 aa).

The protein belongs to the bacterial ribosomal protein bL20 family.

Its function is as follows. Binds directly to 23S ribosomal RNA and is necessary for the in vitro assembly process of the 50S ribosomal subunit. It is not involved in the protein synthesizing functions of that subunit. The chain is Large ribosomal subunit protein bL20 from Gemmatimonas aurantiaca (strain DSM 14586 / JCM 11422 / NBRC 100505 / T-27).